A 366-amino-acid chain; its full sequence is CRS2-associated factor 2, mitochondrial (366 aa).

A mitochondrion-targeting transit peptide spans Met1–Arg14. Positions Arg24 to Asp82 are disordered. A compositionally biased stretch (basic and acidic residues) spans Lys60 to Pro71. CRM domains follow at residues Glu143 to Gln241 and Asp263 to Leu359.

In terms of assembly, part of large ribonucleo-protein complexes that include group IIB introns.

It is found in the mitochondrion. In terms of biological role, may be involved in the splicing of group IIB introns in mitochondria. The protein is CRS2-associated factor 2, mitochondrial of Oryza sativa subsp. japonica (Rice).